Here is a 552-residue protein sequence, read N- to C-terminus: Membrane protein insertase YidC (552 aa).

Residues 3–23 form a helical membrane-spanning segment; the sequence is TKRLILFVIFSFSILMLWDSW. Positions 29–65 are disordered; sequence PPAASQTQTTAQSVEDGSVPQAAKSSASAANQASVPA. A run of 4 helical transmembrane segments spans residues 359–379, 429–449, 463–483, and 503–523; these read WGVA…PLSA, LPIL…LGSV, LSAV…MIIQ, and PIVF…YWLV.

Belongs to the OXA1/ALB3/YidC family. Type 1 subfamily. Interacts with the Sec translocase complex via SecD. Specifically interacts with transmembrane segments of nascent integral membrane proteins during membrane integration.

Its subcellular location is the cell inner membrane. Its function is as follows. Required for the insertion and/or proper folding and/or complex formation of integral membrane proteins into the membrane. Involved in integration of membrane proteins that insert both dependently and independently of the Sec translocase complex, as well as at least some lipoproteins. Aids folding of multispanning membrane proteins. In Methylobacillus flagellatus (strain ATCC 51484 / DSM 6875 / VKM B-1610 / KT), this protein is Membrane protein insertase YidC.